Here is a 92-residue protein sequence, read N- to C-terminus: Small ribosomal subunit protein uS19 (92 aa).

It belongs to the universal ribosomal protein uS19 family.

Protein S19 forms a complex with S13 that binds strongly to the 16S ribosomal RNA. This chain is Small ribosomal subunit protein uS19 (rpsS), found in Halalkalibacterium halodurans (strain ATCC BAA-125 / DSM 18197 / FERM 7344 / JCM 9153 / C-125) (Bacillus halodurans).